The primary structure comprises 279 residues: Pantothenate synthetase (279 aa).

26–33 (MGNLHEGH) is an ATP binding site. His-33 (proton donor) is an active-site residue. Gln-57 contributes to the (R)-pantoate binding site. Gln-57 contacts beta-alanine. An ATP-binding site is contributed by 144–147 (GKKD). Gln-150 contacts (R)-pantoate. ATP-binding positions include Val-173 and 181-184 (LSSR).

The protein belongs to the pantothenate synthetase family. In terms of assembly, homodimer.

Its subcellular location is the cytoplasm. The enzyme catalyses (R)-pantoate + beta-alanine + ATP = (R)-pantothenate + AMP + diphosphate + H(+). It functions in the pathway cofactor biosynthesis; (R)-pantothenate biosynthesis; (R)-pantothenate from (R)-pantoate and beta-alanine: step 1/1. Catalyzes the condensation of pantoate with beta-alanine in an ATP-dependent reaction via a pantoyl-adenylate intermediate. The protein is Pantothenate synthetase of Burkholderia lata (strain ATCC 17760 / DSM 23089 / LMG 22485 / NCIMB 9086 / R18194 / 383).